Consider the following 310-residue polypeptide: p-hydroxybenzoic acid efflux pump subunit AaeA (310 aa).

A helical transmembrane segment spans residues A12–Y32.

It belongs to the membrane fusion protein (MFP) (TC 8.A.1) family.

It localises to the cell inner membrane. Forms an efflux pump with AaeB. This Escherichia coli O139:H28 (strain E24377A / ETEC) protein is p-hydroxybenzoic acid efflux pump subunit AaeA.